Reading from the N-terminus, the 459-residue chain is tRNA modification GTPase MnmE (459 aa).

Residues Arg-20, Glu-85, and Arg-124 each contribute to the (6S)-5-formyl-5,6,7,8-tetrahydrofolate site. The region spanning 221-380 is the TrmE-type G domain; the sequence is GLSTVIIGRP…LEEAIQSLFY (160 aa). Residue Asn-231 participates in K(+) binding. GTP is bound by residues 231-236, 250-256, and 275-278; these read NVGKSS, TDIPGTT, and DTAG. Ser-235 lines the Mg(2+) pocket. Residues Thr-250, Ile-252, and Thr-255 each coordinate K(+). Thr-256 contacts Mg(2+). Lys-459 contributes to the (6S)-5-formyl-5,6,7,8-tetrahydrofolate binding site.

The protein belongs to the TRAFAC class TrmE-Era-EngA-EngB-Septin-like GTPase superfamily. TrmE GTPase family. In terms of assembly, homodimer. Heterotetramer of two MnmE and two MnmG subunits. K(+) is required as a cofactor.

It is found in the cytoplasm. Its function is as follows. Exhibits a very high intrinsic GTPase hydrolysis rate. Involved in the addition of a carboxymethylaminomethyl (cmnm) group at the wobble position (U34) of certain tRNAs, forming tRNA-cmnm(5)s(2)U34. The polypeptide is tRNA modification GTPase MnmE (Bacillus subtilis (strain 168)).